The chain runs to 109 residues: Flagellar hook-basal body complex protein FliE (109 aa).

The interval 1 to 38 (MQAIHNDKSLLSPFSELNTDNRTQREESGSTFKEQKGG) is disordered. A compositionally biased stretch (basic and acidic residues) spans 22-38 (RTQREESGSTFKEQKGG).

This sequence belongs to the FliE family.

It is found in the bacterial flagellum basal body. This is Flagellar hook-basal body complex protein FliE from Helicobacter acinonychis (strain Sheeba).